Here is a 219-residue protein sequence, read N- to C-terminus: Small ribosomal subunit protein uS3 (219 aa).

Residues 38–106 (IRTYLKKKLY…KLNLEIKEIK (69 aa)) form the KH type-2 domain.

Belongs to the universal ribosomal protein uS3 family. Part of the 30S ribosomal subunit. Forms a tight complex with proteins S10 and S14.

Binds the lower part of the 30S subunit head. Binds mRNA in the 70S ribosome, positioning it for translation. In Lachnoclostridium phytofermentans (strain ATCC 700394 / DSM 18823 / ISDg) (Clostridium phytofermentans), this protein is Small ribosomal subunit protein uS3.